The chain runs to 175 residues: NADH-ubiquinone oxidoreductase chain 6 (175 aa).

The next 5 membrane-spanning stretches (helical) occupy residues 1 to 21 (MMTY…VSFS), 25 to 45 (SPIY…GIVL), 47 to 67 (FGGS…MLVV), 88 to 108 (AVLA…CYIL), and 149 to 169 (YGTW…LVIM).

The protein belongs to the complex I subunit 6 family. In terms of assembly, core subunit of respiratory chain NADH dehydrogenase (Complex I) which is composed of 45 different subunits.

It is found in the mitochondrion inner membrane. It carries out the reaction a ubiquinone + NADH + 5 H(+)(in) = a ubiquinol + NAD(+) + 4 H(+)(out). In terms of biological role, core subunit of the mitochondrial membrane respiratory chain NADH dehydrogenase (Complex I) which catalyzes electron transfer from NADH through the respiratory chain, using ubiquinone as an electron acceptor. Essential for the catalytic activity and assembly of complex I. The sequence is that of NADH-ubiquinone oxidoreductase chain 6 (MT-ND6) from Felis catus (Cat).